Consider the following 1178-residue polypeptide: Pyruvate carboxylase, mitochondrial (1178 aa).

The N-terminal 20 residues, 1–20 (MLKFQTVRGGLRLLGVRRSS), are a transit peptide targeting the mitochondrion. An N6-acetyllysine mark is found at lysine 35 and lysine 39. The Biotin carboxylation domain occupies 36-486 (PIKKVMVANR…DTQFIDENPE (451 aa)). The residue at position 79 (lysine 79) is an N6-acetyllysine; alternate. The residue at position 79 (lysine 79) is an N6-succinyllysine; alternate. N6-acetyllysine is present on residues lysine 148 and lysine 152. ATP-binding residues include lysine 152 and glutamate 236. The ATP-grasp domain occupies 156 to 353 (RAIAIAAGVP…LVHAQIHVSE (198 aa)). Lysine 241 carries the N6-acetyllysine modification. Residue histidine 271 coordinates ATP. An N6-acetyllysine mark is found at lysine 297, lysine 316, and lysine 319. Arginine 328 is a catalytic residue. Lysine 434 carries the N6-acetyllysine modification. Position 442 is an N6-succinyllysine (lysine 442). The Pyruvate carboxyltransferase domain occupies 563 to 832 (LLLMDTTFRD…DTEVPLERVF (270 aa)). 571 to 575 (RDAHQ) contacts substrate. Aspartate 572 serves as a coordination point for Mn(2+). An N6-acetyllysine modification is found at lysine 589. Residue arginine 644 coordinates substrate. Lysine 661 and lysine 717 each carry N6-acetyllysine. Lysine 741 contributes to the Mn(2+) binding site. Position 741 is an N6-carboxylysine (lysine 741). N6-acetyllysine is present on lysine 748. Positions 771 and 773 each coordinate Mn(2+). Position 892 is an N6-acetyllysine (lysine 892). Residue threonine 908 participates in substrate binding. Lysine 969 bears the N6-acetyllysine mark. Lysine 988 is modified (N6-acetyllysine; alternate). Lysine 988 carries the post-translational modification N6-succinyllysine; alternate. Lysine 992 bears the N6-acetyllysine mark. Threonine 1003 carries the phosphothreonine modification. Lysine 1061, lysine 1090, and lysine 1124 each carry N6-acetyllysine. The 70-residue stretch at 1109–1178 (KGQIGAPMPG…EGDDLILEIE (70 aa)) folds into the Biotinyl-binding domain. At lysine 1144 the chain carries N6-biotinyllysine.

Homotetramer. Interacts (via the biotin carboxylation domain) with SIRT4. The cofactor is biotin. Mn(2+) serves as cofactor. In terms of processing, acetylation of Lys-748 might play a role in catalytic activity regulation.

The protein resides in the mitochondrion matrix. The catalysed reaction is hydrogencarbonate + pyruvate + ATP = oxaloacetate + ADP + phosphate + H(+). It participates in carbohydrate biosynthesis; gluconeogenesis. Functionally, pyruvate carboxylase catalyzes a 2-step reaction, involving the ATP-dependent carboxylation of the covalently attached biotin in the first step and the transfer of the carboxyl group to pyruvate in the second. Catalyzes in a tissue specific manner, the initial reactions of glucose (liver, kidney) and lipid (adipose tissue, liver, brain) synthesis from pyruvate. The chain is Pyruvate carboxylase, mitochondrial (Pc) from Rattus norvegicus (Rat).